A 547-amino-acid chain; its full sequence is Isoflavonoid 7-O-beta-apiosyl-glucoside beta-glycosidase (547 aa).

Positions 1 to 31 (MHAMTFKAILLLGLLALVSTSASIAFAKEVR) are cleaved as a signal peptide. An a beta-D-glucoside-binding site is contributed by glutamine 59. N-linked (GlcNAc...) asparagine glycosylation is found at asparagine 72 and asparagine 132. Histidine 159 is a binding site for a beta-D-glucoside. Asparagine 175 carries an N-linked (GlcNAc...) asparagine glycan. Residue 204 to 205 (NE) coordinates a beta-D-glucoside. Glutamate 205 serves as the catalytic Proton donor. A disulfide bridge connects residues cysteine 224 and cysteine 232. N-linked (GlcNAc...) asparagine glycosylation occurs at asparagine 285. A beta-D-glucoside contacts are provided by residues tyrosine 348, glutamate 419, tryptophan 468, 475–476 (EW), and phenylalanine 484. The active-site Nucleophile is glutamate 419. A glycan (N-linked (GlcNAc...) asparagine) is linked at asparagine 490.

Belongs to the glycosyl hydrolase 1 family. Homotetramer.

The enzyme catalyses 7-[beta-D-apiofuranosyl-(1-&gt;6)-beta-D-glucopyranosyloxy]isoflavonoid + H2O = a 7-hydroxyisoflavonoid + beta-D-apiofuranosyl-(1-&gt;6)-D-glucose.. With respect to regulation, not inhibited by iron, calcium, mercury, manganese, zinc or EDTA. Hydrolyzes dalpatein 7-O-beta-D-apiofuranosyl-(1-&gt;6)-beta-D-glucopyranoside and dalnigrein 7-O-beta-D-apiofuranosyl-(1-&gt;6)-beta-D-glucopyranoside. Also has activity towards pNP-beta-D-fucoside and pNP-beta-D-glucoside, but not pNP-beta-cellobioside. The chain is Isoflavonoid 7-O-beta-apiosyl-glucoside beta-glycosidase from Dalbergia nigrescens (Thai blackwood).